An 82-amino-acid chain; its full sequence is Small ribosomal subunit protein uS17 (82 aa).

It belongs to the universal ribosomal protein uS17 family. In terms of assembly, part of the 30S ribosomal subunit.

Its function is as follows. One of the primary rRNA binding proteins, it binds specifically to the 5'-end of 16S ribosomal RNA. The protein is Small ribosomal subunit protein uS17 of Bradyrhizobium diazoefficiens (strain JCM 10833 / BCRC 13528 / IAM 13628 / NBRC 14792 / USDA 110).